Reading from the N-terminus, the 111-residue chain is Dormancy-associated protein 1 (111 aa).

A disordered region spans residues 30–60 (KDDGASNQLMRSTSIPTTPTTPVTPTTPSSA). The span at 41 to 59 (STSIPTTPTTPVTPTTPSS) shows a compositional bias: low complexity.

It belongs to the DRM1/ARP family. In terms of tissue distribution, expressed in axilary buds and in non-growing stems and roots. Detected in sepals, stamens and carpels, but barely detected in petals or leaflets.

This Pisum sativum (Garden pea) protein is Dormancy-associated protein 1.